The chain runs to 896 residues: Myelin regulatory factor-like protein (896 aa).

Positions 111–403 (GLPHRTFHNC…SNPGQFENDI (293 aa)) form a DNA-binding region, NDT80. The Peptidase S74 domain maps to 449–557 (SDSRAKQNVQ…KLTNNLEERI (109 aa)). A coiled-coil region spans residues 541-573 (GAVKQLCKLTNNLEERIEELEIWNRKLARLKRL). The helical transmembrane segment at 622–638 (VFQSLVITLIAVMAFCL) threads the bilayer. Residues 648-658 (APSSNLTSSQE) are compositionally biased toward polar residues. The tract at residues 648-672 (APSSNLTSSQEPALPSTASPSAPNT) is disordered. The span at 659-672 (PALPSTASPSAPNT) shows a compositional bias: low complexity.

Belongs to the MRF family.

The protein resides in the membrane. The polypeptide is Myelin regulatory factor-like protein (MYRFL) (Bos taurus (Bovine)).